A 176-amino-acid polypeptide reads, in one-letter code: 3-hydroxyanthranilate 3,4-dioxygenase (176 aa).

Residue Arg-44 coordinates O2. Fe cation-binding residues include His-48, Glu-54, and His-92. A substrate-binding site is contributed by Glu-54. Substrate-binding residues include Arg-96 and Glu-106. Fe cation-binding residues include Cys-121, Cys-124, Cys-158, and Cys-161.

Belongs to the 3-HAO family. Homodimer. Fe(2+) is required as a cofactor.

It catalyses the reaction 3-hydroxyanthranilate + O2 = (2Z,4Z)-2-amino-3-carboxymuconate 6-semialdehyde. It functions in the pathway cofactor biosynthesis; NAD(+) biosynthesis; quinolinate from L-kynurenine: step 3/3. Its function is as follows. Catalyzes the oxidative ring opening of 3-hydroxyanthranilate to 2-amino-3-carboxymuconate semialdehyde, which spontaneously cyclizes to quinolinate. The sequence is that of 3-hydroxyanthranilate 3,4-dioxygenase from Xanthomonas euvesicatoria pv. vesicatoria (strain 85-10) (Xanthomonas campestris pv. vesicatoria).